Here is a 189-residue protein sequence, read N- to C-terminus: UPF0301 protein PputW619_0469 (189 aa).

It belongs to the UPF0301 (AlgH) family.

The polypeptide is UPF0301 protein PputW619_0469 (Pseudomonas putida (strain W619)).